The following is a 232-amino-acid chain: Triosephosphate isomerase (232 aa).

6–8 is a substrate binding site; sequence NLK. Residue H91 is the Electrophile of the active site. E158 (proton acceptor) is an active-site residue. Positions 164 and 194 each coordinate substrate.

Belongs to the triosephosphate isomerase family. As to quaternary structure, homodimer.

Its subcellular location is the cytoplasm. It carries out the reaction D-glyceraldehyde 3-phosphate = dihydroxyacetone phosphate. The protein operates within carbohydrate biosynthesis; gluconeogenesis. Its pathway is carbohydrate degradation; glycolysis; D-glyceraldehyde 3-phosphate from glycerone phosphate: step 1/1. Its function is as follows. Involved in the gluconeogenesis. Catalyzes stereospecifically the conversion of dihydroxyacetone phosphate (DHAP) to D-glyceraldehyde-3-phosphate (G3P). This is Triosephosphate isomerase from Campylobacter hominis (strain ATCC BAA-381 / DSM 21671 / CCUG 45161 / LMG 19568 / NCTC 13146 / CH001A).